We begin with the raw amino-acid sequence, 101 residues long: Small ribosomal subunit protein uS14 (101 aa).

Belongs to the universal ribosomal protein uS14 family. Part of the 30S ribosomal subunit. Contacts proteins S3 and S10.

Its function is as follows. Binds 16S rRNA, required for the assembly of 30S particles and may also be responsible for determining the conformation of the 16S rRNA at the A site. This is Small ribosomal subunit protein uS14 from Pseudomonas putida (strain GB-1).